The chain runs to 804 residues: Leucine--tRNA ligase (804 aa).

The 'HIGH' region signature appears at 39–50 (PYPSGAGLHVGH). A 'KMSKS' region motif is present at residues 580–584 (KMSKS). Residue Lys-583 participates in ATP binding.

Belongs to the class-I aminoacyl-tRNA synthetase family.

It localises to the cytoplasm. It catalyses the reaction tRNA(Leu) + L-leucine + ATP = L-leucyl-tRNA(Leu) + AMP + diphosphate. This Mycoplasma capricolum subsp. capricolum (strain California kid / ATCC 27343 / NCTC 10154) protein is Leucine--tRNA ligase.